The primary structure comprises 95 residues: Co-chaperonin GroES (95 aa).

This sequence belongs to the GroES chaperonin family. As to quaternary structure, heptamer of 7 subunits arranged in a ring. Interacts with the chaperonin GroEL.

Its subcellular location is the cytoplasm. Its function is as follows. Together with the chaperonin GroEL, plays an essential role in assisting protein folding. The GroEL-GroES system forms a nano-cage that allows encapsulation of the non-native substrate proteins and provides a physical environment optimized to promote and accelerate protein folding. GroES binds to the apical surface of the GroEL ring, thereby capping the opening of the GroEL channel. The sequence is that of Co-chaperonin GroES from Rhodobacter capsulatus (Rhodopseudomonas capsulata).